The primary structure comprises 456 residues: NADPH-ferredoxin reductase FprA (456 aa).

Positions 17, 43, 51, and 87 each coordinate FAD. NADP(+) is bound by residues R113, N158–V161, R202–R203, and E214. Residues W362 and G369 to I371 contribute to the FAD site. G369 is a binding site for NADP(+).

This sequence belongs to the ferredoxin--NADP reductase type 1 family. Monomer. FAD is required as a cofactor.

It carries out the reaction 2 reduced [2Fe-2S]-[ferredoxin] + NADP(+) + H(+) = 2 oxidized [2Fe-2S]-[ferredoxin] + NADPH. Its function is as follows. May serve as electron transfer protein and supply electrons to P450 systems. In Mycobacterium leprae (strain TN), this protein is NADPH-ferredoxin reductase FprA (fprA).